The following is a 269-amino-acid chain: MYIAKKKFGQNFLKDKNALNKIIESIPENAENIVEIGAGLGDLTYELLRKFKVKSYEIDKDLIEFLKSKFACELENRKFELVFGDALKFWKNGLCNKNYFLVANLPYYVATNMILKAIDDELCDGFVAMVQKEVAEKFCAESGDSEFGGISVLADIFGKCEFLFSVPADSFEPAPKVVSAVIRLKKTRKIDDIFENSVQYENFKNFLKICFSSPRKTIMKNLSTKFDKEILQSIFEKLDLTTNLRAHELNFTLFFKIFKNLRIRDERNK.

Asparagine 11, leucine 13, glycine 37, glutamate 57, aspartate 85, and asparagine 104 together coordinate S-adenosyl-L-methionine.

It belongs to the class I-like SAM-binding methyltransferase superfamily. rRNA adenine N(6)-methyltransferase family. RsmA subfamily.

It localises to the cytoplasm. The enzyme catalyses adenosine(1518)/adenosine(1519) in 16S rRNA + 4 S-adenosyl-L-methionine = N(6)-dimethyladenosine(1518)/N(6)-dimethyladenosine(1519) in 16S rRNA + 4 S-adenosyl-L-homocysteine + 4 H(+). Its function is as follows. Specifically dimethylates two adjacent adenosines (A1518 and A1519) in the loop of a conserved hairpin near the 3'-end of 16S rRNA in the 30S particle. May play a critical role in biogenesis of 30S subunits. The chain is Ribosomal RNA small subunit methyltransferase A from Campylobacter hominis (strain ATCC BAA-381 / DSM 21671 / CCUG 45161 / LMG 19568 / NCTC 13146 / CH001A).